Here is a 284-residue protein sequence, read N- to C-terminus: L-ribulose-5-phosphate 3-epimerase UlaE (284 aa).

It belongs to the L-ribulose-5-phosphate 3-epimerase family.

The enzyme catalyses L-ribulose 5-phosphate = L-xylulose 5-phosphate. It participates in cofactor degradation; L-ascorbate degradation; D-xylulose 5-phosphate from L-ascorbate: step 3/4. In terms of biological role, catalyzes the isomerization of L-xylulose-5-phosphate to L-ribulose-5-phosphate. Is involved in the anaerobic L-ascorbate utilization. In Escherichia coli O139:H28 (strain E24377A / ETEC), this protein is L-ribulose-5-phosphate 3-epimerase UlaE.